Reading from the N-terminus, the 197-residue chain is Imidazoleglycerol-phosphate dehydratase (197 aa).

The protein belongs to the imidazoleglycerol-phosphate dehydratase family.

The protein resides in the cytoplasm. It carries out the reaction D-erythro-1-(imidazol-4-yl)glycerol 3-phosphate = 3-(imidazol-4-yl)-2-oxopropyl phosphate + H2O. It functions in the pathway amino-acid biosynthesis; L-histidine biosynthesis; L-histidine from 5-phospho-alpha-D-ribose 1-diphosphate: step 6/9. The chain is Imidazoleglycerol-phosphate dehydratase from Pseudomonas aeruginosa (strain LESB58).